The primary structure comprises 258 residues: 3-deoxy-manno-octulosonate cytidylyltransferase (258 aa).

Belongs to the KdsB family.

It localises to the cytoplasm. It catalyses the reaction 3-deoxy-alpha-D-manno-oct-2-ulosonate + CTP = CMP-3-deoxy-beta-D-manno-octulosonate + diphosphate. The protein operates within nucleotide-sugar biosynthesis; CMP-3-deoxy-D-manno-octulosonate biosynthesis; CMP-3-deoxy-D-manno-octulosonate from 3-deoxy-D-manno-octulosonate and CTP: step 1/1. It functions in the pathway bacterial outer membrane biogenesis; lipopolysaccharide biosynthesis. Functionally, activates KDO (a required 8-carbon sugar) for incorporation into bacterial lipopolysaccharide in Gram-negative bacteria. This chain is 3-deoxy-manno-octulosonate cytidylyltransferase, found in Gemmatimonas aurantiaca (strain DSM 14586 / JCM 11422 / NBRC 100505 / T-27).